The following is a 301-amino-acid chain: GTPase Era (301 aa).

An Era-type G domain is found at 4 to 173; that stretch reads KAGFVALIGK…LECISEHLSP (170 aa). Positions 12–19 are G1; sequence GKPNAGKS. 12–19 lines the GTP pocket; the sequence is GKPNAGKS. A G2 region spans residues 38–42; the sequence is NATRK. Positions 64–67 are G3; that stretch reads DTPG. Residues 64 to 68 and 122 to 125 contribute to the GTP site; these read DTPGL and SKID. The interval 122 to 125 is G4; the sequence is SKID. Positions 152-154 are G5; it reads LSA. One can recognise a KH type-2 domain in the interval 204 to 280; it reads LSDEIPYESD…FLNLQVIAQK (77 aa).

The protein belongs to the TRAFAC class TrmE-Era-EngA-EngB-Septin-like GTPase superfamily. Era GTPase family. In terms of assembly, monomer.

The protein localises to the cytoplasm. It localises to the cell inner membrane. Functionally, an essential GTPase that binds both GDP and GTP, with rapid nucleotide exchange. Plays a role in 16S rRNA processing and 30S ribosomal subunit biogenesis and possibly also in cell cycle regulation and energy metabolism. This is GTPase Era from Helicobacter acinonychis (strain Sheeba).